Here is a 312-residue protein sequence, read N- to C-terminus: Glyceraldehyde-3-phosphate dehydrogenase, cytosolic (312 aa).

NAD(+)-binding positions include 5-6 and Asp-27; that span reads RI. D-glyceraldehyde 3-phosphate is bound by residues 144–146, Thr-175, 204–205, and Arg-227; these read SCT and TG. Catalysis depends on Cys-145, which acts as the Nucleophile. Position 309 (Asn-309) interacts with NAD(+).

Belongs to the glyceraldehyde-3-phosphate dehydrogenase family. As to quaternary structure, homotetramer.

Its subcellular location is the cytoplasm. It carries out the reaction D-glyceraldehyde 3-phosphate + phosphate + NAD(+) = (2R)-3-phospho-glyceroyl phosphate + NADH + H(+). It functions in the pathway carbohydrate degradation; glycolysis; pyruvate from D-glyceraldehyde 3-phosphate: step 1/5. Key enzyme in glycolysis that catalyzes the first step of the pathway by converting D-glyceraldehyde 3-phosphate (G3P) into 3-phospho-D-glyceroyl phosphate. Essential for the maintenance of cellular ATP levels and carbohydrate metabolism. The polypeptide is Glyceraldehyde-3-phosphate dehydrogenase, cytosolic (GapC) (Scenedesmus vacuolatus (Green alga)).